A 359-amino-acid polypeptide reads, in one-letter code: Alpha-N-acetylneuraminide alpha-2,8-sialyltransferase (359 aa).

Topologically, residues 1 to 28 (MWGRWRGAGGRRGVAQPVIPQMKLLGGR) are cytoplasmic. Residues 29–49 (VPLGASALGLLIVCWFYIFPG) form a helical; Signal-anchor for type II membrane protein membrane-spanning segment. Residues 50–359 (GERLPGHKEM…KKDVSSKKPH (310 aa)) are Lumenal-facing. N-linked (GlcNAc...) asparagine glycans are attached at residues asparagine 73 and asparagine 121. Intrachain disulfides connect cysteine 140–cysteine 289 and cysteine 154–cysteine 349. CMP-N-acetyl-beta-neuraminate-binding residues include asparagine 145 and asparagine 168. Asparagine 247 is a glycosylation site (N-linked (GlcNAc...) asparagine). Residues serine 276, threonine 277, glycine 278, tryptophan 298, and histidine 312 each coordinate CMP-N-acetyl-beta-neuraminate. Histidine 324 serves as the catalytic Proton donor/acceptor.

This sequence belongs to the glycosyltransferase 29 family. As to expression, expressed in the dorsal blastopore lip and in the presumptive neuroectoderm in stage 11 embryos. During gastrulation, strongly expressed in the involuting mesoderm. At stages 13 and 16, expressed in the neural plate and neural fold, paraxial mesoderm and notochord. At stages 19 and 22 (neural tube and early tailbud), strongly expressed in the neural tube and notochord. At the tadpole stage, expressed in the head region, branchial arches and otic and optic primordia. Also localized in the notochord and weakly expressed in the somites. In adults, expressed in the brain and ovary. Isoform 2 (short) is expressed at a low level in the adult testis and muscle, and at a high level in the skin. Isoform 1 (long) is expressed at a high level in the adult lung and kidney. Both isoforms 1 and 2 are expressed in the gut and liver.

It localises to the golgi apparatus membrane. It carries out the reaction an N-acetyl-alpha-neuraminyl-(2-&gt;3)-beta-D-galactosyl derivative + CMP-N-acetyl-beta-neuraminate = an N-acetyl-alpha-neuraminyl-(2-&gt;8)-N-acetyl-alpha-neuraminyl-(2-&gt;3)-beta-D-galactosyl derivative + CMP + H(+). The catalysed reaction is a ganglioside GM3 (d18:1(4E)) + CMP-N-acetyl-beta-neuraminate = a ganglioside GD3 (d18:1(4E)) + CMP + H(+). The enzyme catalyses a ganglioside GD3 (d18:1(4E)) + CMP-N-acetyl-beta-neuraminate = a ganglioside GT3 (d18:1(4E)) + CMP + H(+). It catalyses the reaction a ganglioside GD1a (d18:1(4E)) + CMP-N-acetyl-beta-neuraminate = a ganglioside GT1a (d18:1(4E)) + CMP + H(+). It carries out the reaction a ganglioside GT1b (d18:1(4E)) + CMP-N-acetyl-beta-neuraminate = a ganglioside GQ1b (d18:1(4E)) + CMP + H(+). The catalysed reaction is a ganglioside GM1b (d18:1(4E)) + CMP-N-acetyl-beta-neuraminate = a ganglioside GD1c (d18:1(4E)) + CMP + H(+). The enzyme catalyses a ganglioside GD3 + CMP-N-acetyl-beta-neuraminate = a ganglioside GT3 + CMP + H(+). It catalyses the reaction [alpha-N-acetylneuraminyl-(2-&gt;8)](n)-alpha-N-acetylneuraminyl-(2-&gt;8)-alpha-N-acetylneuraminyl-(2-&gt;3)-beta-D-galactosyl-(1-&gt;4)-beta-D-glucosyl-(1&lt;-&gt;1)-ceramide + CMP-N-acetyl-beta-neuraminate = [alpha-N-acetylneuraminyl-(2-&gt;8)](n+1)-alpha-N-acetylneuraminyl-(2-&gt;8)-alpha-N-acetylneuraminyl-(2-&gt;3)-beta-D-galactosyl-(1-&gt;4)-beta-D-glucosyl-(1&lt;-&gt;1)-ceramide + CMP + H(+). The protein operates within protein modification; protein glycosylation. It participates in lipid metabolism; sphingolipid metabolism. In terms of biological role, catalyzes the addition of sialic acid in alpha 2,8-linkage to the sialic acid moiety of the ganglioside GM3 to form ganglioside GD3; gangliosides are a subfamily of complex glycosphingolipds that contain one or more residues of sialic acid. Glycosphingolipids are required for convergence extension movements during early development. Can catalyze the addition of a second alpha-2,8- sialic acid to GD3 to form GT3. Can use GM1b, GD1a and GT1b as acceptor substrates to synthesize GD1c, GT1a and GQ1b respectively. This is Alpha-N-acetylneuraminide alpha-2,8-sialyltransferase from Xenopus laevis (African clawed frog).